Here is a 490-residue protein sequence, read N- to C-terminus: Asparagine--tRNA ligase (490 aa).

Belongs to the class-II aminoacyl-tRNA synthetase family. Homodimer.

It localises to the cytoplasm. The enzyme catalyses tRNA(Asn) + L-asparagine + ATP = L-asparaginyl-tRNA(Asn) + AMP + diphosphate + H(+). The chain is Asparagine--tRNA ligase from Rhodopirellula baltica (strain DSM 10527 / NCIMB 13988 / SH1).